Reading from the N-terminus, the 378-residue chain is Sphingosine 1-phosphate receptor 3 (378 aa).

The Extracellular portion of the chain corresponds to 1-40; the sequence is MATALPPRLQPVRGNETLREHYQYVGKLAGRLKEASEGST. An N-linked (GlcNAc...) asparagine glycan is attached at asparagine 15. A helical transmembrane segment spans residues 41-65; it reads LTTVLFLVICSFIVLENLMVLIAIW. The Cytoplasmic portion of the chain corresponds to 66 to 72; the sequence is KNNKFHN. Residues 73 to 101 traverse the membrane as a helical segment; the sequence is RMYFFIGNLALCDLLAGIAYKVNILMSGK. At 102–115 the chain is on the extracellular side; that stretch reads KTFSLSPTVWFLRE. A helical membrane pass occupies residues 116–134; the sequence is GSMFVALGASTCSLLAIAI. Residues 135 to 153 lie on the Cytoplasmic side of the membrane; that stretch reads ERHLTMIKMRPYDANKRHR. A helical membrane pass occupies residues 154-179; the sequence is VFLLIGMCWLIAFTLGALPILGWNCL. The Extracellular segment spans residues 180–195; the sequence is HNLPDCSTILPLYSKK. A helical membrane pass occupies residues 196–216; sequence YIAFCISIFTAILVTIVILYA. Over 217 to 243 the chain is Cytoplasmic; it reads RIYFLVKSSSRKVANHNNSERSMALLR. Residues 244–265 form a helical membrane-spanning segment; the sequence is TVVIVVSVFIACWSPLFILFLI. The Extracellular segment spans residues 266 to 281; it reads DVACRVQACPILFKAQ. A helical membrane pass occupies residues 282 to 302; the sequence is WFIVLAVLNSAMNPVIYTLAS. At 303–378 the chain is on the cytoplasmic side; it reads KEMRRAFFRL…AALQNGIFCN (76 aa). A Phosphoserine modification is found at serine 326. Residues 327-357 form a disordered region; the sequence is PIQPALDPSRSKSSSSNNSSHSPKVKEDLPH. Residues 337–348 are compositionally biased toward low complexity; sequence SKSSSSNNSSHS.

This sequence belongs to the G-protein coupled receptor 1 family. As to expression, expressed in all tissues, but most abundantly in heart, placenta, kidney, and liver.

It localises to the cell membrane. In terms of biological role, receptor for the lysosphingolipid sphingosine 1-phosphate (S1P). S1P is a bioactive lysophospholipid that elicits diverse physiological effect on most types of cells and tissues. When expressed in rat HTC4 hepatoma cells, is capable of mediating S1P-induced cell proliferation and suppression of apoptosis. The protein is Sphingosine 1-phosphate receptor 3 of Homo sapiens (Human).